Consider the following 144-residue polypeptide: Large ribosomal subunit protein uL13 (144 aa).

The protein belongs to the universal ribosomal protein uL13 family. As to quaternary structure, part of the 50S ribosomal subunit.

Its function is as follows. This protein is one of the early assembly proteins of the 50S ribosomal subunit, although it is not seen to bind rRNA by itself. It is important during the early stages of 50S assembly. This is Large ribosomal subunit protein uL13 from Mesomycoplasma hyopneumoniae (strain 7448) (Mycoplasma hyopneumoniae).